The primary structure comprises 229 residues: tRNA (guanine-N(7)-)-methyltransferase (229 aa).

Glutamate 62, glutamate 87, aspartate 114, and aspartate 137 together coordinate S-adenosyl-L-methionine. Aspartate 137 is an active-site residue. Residue lysine 141 coordinates substrate. Residues 143–148 are interaction with RNA; the sequence is KHNKRR. Residues aspartate 173 and 208 to 211 each bind substrate; that span reads TKFE.

This sequence belongs to the class I-like SAM-binding methyltransferase superfamily. TrmB family.

The catalysed reaction is guanosine(46) in tRNA + S-adenosyl-L-methionine = N(7)-methylguanosine(46) in tRNA + S-adenosyl-L-homocysteine. It participates in tRNA modification; N(7)-methylguanine-tRNA biosynthesis. Catalyzes the formation of N(7)-methylguanine at position 46 (m7G46) in tRNA. The polypeptide is tRNA (guanine-N(7)-)-methyltransferase (Francisella tularensis subsp. novicida (strain U112)).